The primary structure comprises 263 residues: 3-methyl-2-oxobutanoate hydroxymethyltransferase (263 aa).

Positions 45 and 84 each coordinate Mg(2+). 3-methyl-2-oxobutanoate contacts are provided by residues 45–46, Asp-84, and Lys-112; that span reads DS. Glu-114 is a Mg(2+) binding site. Glu-180 functions as the Proton acceptor in the catalytic mechanism.

It belongs to the PanB family. As to quaternary structure, homodecamer; pentamer of dimers. It depends on Mg(2+) as a cofactor.

The protein resides in the cytoplasm. It catalyses the reaction 3-methyl-2-oxobutanoate + (6R)-5,10-methylene-5,6,7,8-tetrahydrofolate + H2O = 2-dehydropantoate + (6S)-5,6,7,8-tetrahydrofolate. It functions in the pathway cofactor biosynthesis; (R)-pantothenate biosynthesis; (R)-pantoate from 3-methyl-2-oxobutanoate: step 1/2. Catalyzes the reversible reaction in which hydroxymethyl group from 5,10-methylenetetrahydrofolate is transferred onto alpha-ketoisovalerate to form ketopantoate. The sequence is that of 3-methyl-2-oxobutanoate hydroxymethyltransferase from Citrobacter koseri (strain ATCC BAA-895 / CDC 4225-83 / SGSC4696).